The primary structure comprises 151 residues: MTESSFKLAIVVSQFNRAVTEKLLNGVLQRLTELGVQANQIKTVWVPGAVEIPLLAKRLAKSKHYQAVVCLGAVIRGETDHYNYVCQQVSFGCQQVALEYEVPIIFGVLTTTTKEQAFARAGGERGNKGADWADAAVSMIKLMKEIEITDE.

5-amino-6-(D-ribitylamino)uracil contacts are provided by residues F15, 49-51, and 73-75; these read AVE and AVI. 78–79 provides a ligand contact to (2S)-2-hydroxy-3-oxobutyl phosphate; that stretch reads ET. H81 acts as the Proton donor in catalysis. A 5-amino-6-(D-ribitylamino)uracil-binding site is contributed by F106. Position 120 (R120) interacts with (2S)-2-hydroxy-3-oxobutyl phosphate.

This sequence belongs to the DMRL synthase family. In terms of assembly, forms an icosahedral capsid composed of 60 subunits, arranged as a dodecamer of pentamers.

The catalysed reaction is (2S)-2-hydroxy-3-oxobutyl phosphate + 5-amino-6-(D-ribitylamino)uracil = 6,7-dimethyl-8-(1-D-ribityl)lumazine + phosphate + 2 H2O + H(+). The protein operates within cofactor biosynthesis; riboflavin biosynthesis; riboflavin from 2-hydroxy-3-oxobutyl phosphate and 5-amino-6-(D-ribitylamino)uracil: step 1/2. Catalyzes the formation of 6,7-dimethyl-8-ribityllumazine by condensation of 5-amino-6-(D-ribitylamino)uracil with 3,4-dihydroxy-2-butanone 4-phosphate. This is the penultimate step in the biosynthesis of riboflavin. The sequence is that of 6,7-dimethyl-8-ribityllumazine synthase from Coxiella burnetii (strain CbuG_Q212) (Coxiella burnetii (strain Q212)).